Consider the following 172-residue polypeptide: WW domain binding protein VOPP1 (172 aa).

The signal sequence occupies residues 1–22 (MRRQPAKVAALLLGLLLECTEA). Topologically, residues 23-60 (KKHCWYFEGLYPTYYICRSYEDCCGSRCCVRALSIQRL) are extracellular. A helical transmembrane segment spans residues 61–81 (WYFWFLLMMGVLFCCGAGFFI). Residues 82-172 (RRRMYPPPLI…PPYEQVVKAK (91 aa)) are Cytoplasmic-facing. A disordered region spans residues 102–153 (RQPPNPGPGAQQPGPPYYTDPGGPGMNPVGNSMAMAFQVPPNSPQGSVACPP). The span at 104–119 (PPNPGPGAQQPGPPYY) shows a compositional bias: pro residues.

The protein belongs to the VOPP1/ECOP family. In terms of assembly, interacts with WWOX (via WW domain). In terms of tissue distribution, widely expressed with highest levels in thymus and ovary.

It is found in the cytoplasmic vesicle membrane. The protein resides in the late endosome membrane. Its subcellular location is the lysosome membrane. Its function is as follows. Increases the transcriptional activity of NFKB1 by facilitating its nuclear translocation, DNA-binding and associated apoptotic response, when overexpressed. May sequester WWOX in lysosomal vesicles and thereby regulate WWOX role as tumor suppressor. This is WW domain binding protein VOPP1 from Homo sapiens (Human).